The following is a 616-amino-acid chain: MADDWRQVCETYRRAITLSDVESKNDPENEPYRSKYRARELLREVRVLLCPEEEEESEAEGKEERRDGPESGGRRGESGELLAARLAVVEFRLGLNHTETEEMSAGEEHLVKSGRIMERFRLSEEGVSVYIQAQNNLGILWADRGEIRVAQRYLESAESLYYQYMKEIGKPAIDPDEHFFSEEQKLTEQERTKRFERVYTHTLYYLAQVYKHLKQDEKAAQYCHTTLQRQLEYDSYNPVEWAINAATLSQYYVTKQCYMESRHCLAAANVIFSKAEQIPSAEAAKENEAEQERLDLLRQKKAEIARCWVKYCLNLLQDARKKLEDNIGELDVDIQEELKAQRQKEEDEKEKDRKKAILFGSSDIYDSVQAAEEKVECSHPLDFKEAREVFLVGQNYINESKEYFQLDGHVTDHIEIIQDHSSLFKLLAFFEEDYERRCKMHKRRIDMLEPLCKELNPQYYLLICRQLQFELADTSYEMMDLKVAIGNKLDEMDTHTIKKINSLAQTAIKYYEMFLDSLRSPDQKFPEKLEEDVLRPAMVAKFRIARLYGKLISTDGKIQLENIQKSLNNYKYIVDYCEINKEAIKCIETELELSKEMVALLPTRMERLRIQLASFS.

The segment at Glu52–Ser78 is disordered. Over residues Ala59–Ser78 the composition is skewed to basic and acidic residues.

It belongs to the KIF-binding protein family.

It localises to the cytoplasm. The protein localises to the cytoskeleton. Functionally, activator of KIF1B plus-end-directed microtubule motor activity. Required for organization of axonal microtubules, and axonal outgrowth and maintenance during peripheral and central nervous system development. This chain is KIF-binding protein, found in Xenopus tropicalis (Western clawed frog).